Here is a 461-residue protein sequence, read N- to C-terminus: MGLSTVPGLLLPLVLRALLVDVYPAGVHGLVLHPGDREKRESLCPQGKYSHPQNRSICCTKCHKGTYLHNDCLGPGLDTDCRECDNGTFTASENHLTQCLSCSKCRSEMSQVEISPCTVDRDTVCGCRKNQYRKYWSETLFQCLNCSLCPNGTVQLPCLEKQDTICNCHSGFFLRDKECVSCVNCKNADCKNLCPATSETRNDFQDTGTTVLLPLVIFFGLCLAFFLFVGLACRYQRWKPKLYSIICGKSTPVKEGEPEPLATAPSFGPITTFSPIPSFSPTTTFSPVPSFSPISSPTFTPCDWSNIKVTSPPKEIAPPPQGAGPILPMPPASTPVPTPLPKWGGSAHSAHSAPAQLADADPATLYAVVDGVPPTRWKEFVRRLGLSEHEIERLELQNGRCLREAQYSMLAEWRRRTSRREATLELLGSVLRDMDLLGCLEDIEEALRGPARLAPAPHLLR.

The signal sequence occupies residues 1–29; sequence MGLSTVPGLLLPLVLRALLVDVYPAGVHG. Over 30–210 the chain is Extracellular; sequence LVLHPGDREK…RNDFQDTGTT (181 aa). TNFR-Cys repeat units lie at residues 43 to 82, 83 to 125, 126 to 166, and 167 to 195; these read LCPQGKYSHPQNRSICCTKCHKGTYLHNDCLGPGLDTDCR, ECDN…DTVC, GCRK…DTIC, and NCHSGFFLRDKECVSCVNCKNADCKNLCP. Intrachain disulfides connect C44–C58, C59–C72, C62–C81, C84–C99, C102–C117, C105–C125, and C127–C143. N-linked (GlcNAc...) asparagine glycosylation occurs at N54. A glycan (N-linked (GlcNAc...) asparagine) is linked at N86. N-linked (GlcNAc...) asparagine glycosylation is found at N145 and N151. Disulfide bonds link C146–C158, C149–C166, C168–C179, C182–C194, and C185–C190. The chain crosses the membrane as a helical span at residues 211–233; the sequence is VLLPLVIFFGLCLAFFLFVGLAC. The Cytoplasmic segment spans residues 234–461; it reads RYQRWKPKLY…RLAPAPHLLR (228 aa). The segment at 340–350 is N-SMase activation domain (NSD); that stretch reads LPKWGGSAHSA. A Death domain is found at 362–447; the sequence is PATLYAVVDG…GCLEDIEEAL (86 aa).

In terms of assembly, binding of TNF to the extracellular domain leads to homotrimerization. The aggregated death domains provide a novel molecular interface that interacts specifically with the death domain of TRADD. Various TRADD-interacting proteins such as TRAFS, RIPK1 and possibly FADD, are recruited to the complex by their association with TRADD. This complex activates at least two distinct signaling cascades, apoptosis and NF-kappa-B signaling. Interacts with BAG4, BABAM2, FEM1B, GRB2, SQSTM1 and TRPC4AP. Interacts with DAB2IP. Interacts directly with NOL3 (via CARD domain); inhibits TNF-signaling pathway. Interacts with SH3RF2, TRADD and RIPK1. SH3RF2 facilitates the recruitment of RIPK1 and TRADD to TNFRSF1A in a TNF-alpha-dependent process. Interacts with PGLYRP1; this interaction is important for cell death induction. Interacts (via death domain) with MADD (via death domain).

Its subcellular location is the cell membrane. The protein localises to the golgi apparatus membrane. Receptor for TNFSF2/TNF-alpha and homotrimeric TNFSF1/lymphotoxin-alpha. The adapter molecule FADD recruits caspase-8 to the activated receptor. The resulting death-inducing signaling complex (DISC) performs caspase-8 proteolytic activation which initiates the subsequent cascade of caspases (aspartate-specific cysteine proteases) mediating apoptosis. The protein is Tumor necrosis factor receptor superfamily member 1A (TNFRSF1A) of Sus scrofa (Pig).